The chain runs to 623 residues: Peptide transporter PTR2 (623 aa).

Disordered stretches follow at residues 1 to 20 and 31 to 58; these read MVSS…VLTD and DYED…TPQE. 11 helical membrane passes run 134–154, 163–183, 191–211, 250–270, 277–297, 385–405, 418–438, 448–468, 499–519, 529–549, and 557–577; these read ALTN…GYLG, AIQW…FASI, NAGL…SGLM, ITNV…ATSY, FWLA…FLFI, IIFN…IGAM, FNPL…YPLL, IWRI…GFVL, LFIL…ELAY, LVYA…LAIT, and LHWV…VMLA.

Belongs to the major facilitator superfamily. Proton-dependent oligopeptide transporter (POT/PTR) (TC 2.A.17) family.

It is found in the membrane. Uptake of small peptides. This chain is Peptide transporter PTR2 (PTR2), found in Candida albicans (Yeast).